A 542-amino-acid chain; its full sequence is Excitatory amino acid transporter 1 (542 aa).

The Cytoplasmic portion of the chain corresponds to 1–47; that stretch reads MTKSNGEEARLGGRMERFQQGVRKRTLLAKKKVQNITKEDVKSYLFR. A helical transmembrane segment spans residues 48-68; that stretch reads NAFVLLTVTAVIVGTILGFTL. At 69–86 the chain is on the extracellular side; sequence RPYRMSYREVKYFSFPGE. Residues 87–108 form a helical membrane-spanning segment; sequence LLMRMLQMLVLPLIISSLVTGM. The Cytoplasmic portion of the chain corresponds to 109 to 122; that stretch reads AALDSKASGKMGMR. A helical transmembrane segment spans residues 123 to 145; sequence AVVYYMTTTIIAVVIGIIIVIII. Over 146 to 236 the chain is Extracellular; the sequence is HPGKGTKENM…ITEELVPVPG (91 aa). Residues 237–260 form a helical membrane-spanning segment; sequence SVNGVNALGLVVFSMCFGFVIGNM. Over 261-269 the chain is Cytoplasmic; sequence KEQGQALRE. Residues 270–297 traverse the membrane as a helical segment; sequence FFDSLNEAIMRLVAVIMWYAPLGILFLI. At 298 to 318 the chain is on the extracellular side; the sequence is AGKIVEMEDMGVIGGQLAMYT. The helical transmembrane segment at 319–340 threads the bilayer; the sequence is VTVIVGLLIHAVIVLPLLYFLV. At 341–345 the chain is on the cytoplasmic side; it reads TRKNP. The discontinuously helical intramembrane region spans 346-376; that stretch reads WVFIGGLLQALITALGTSSSSATLPITFKCL. 363–365 provides a ligand contact to L-aspartate; the sequence is SSS. At 377 to 385 the chain is on the cytoplasmic side; that stretch reads EENNGVDKR. The helical transmembrane segment at 386–412 threads the bilayer; it reads VTRFVLPVGATINMDGTALYEALAAIF. Residues glycine 394, threonine 396, and asparagine 398 each coordinate Na(+). Residue threonine 402 participates in L-aspartate binding. Residues 413 to 425 are Extracellular-facing; it reads IAQVNNFELNFGQ. The discontinuously helical intramembrane region spans 426–459; that stretch reads IITISITATAASIGAAGIPQAGLVTMVIVLTSVG. 443-447 lines the L-aspartate pocket; the sequence is IPQAG. The Extracellular segment spans residues 460-472; it reads LPTDDITLIIAVD. A helical membrane pass occupies residues 473 to 494; the sequence is WFLDRLRTTTNVLGDSLGAGIV. L-aspartate-binding residues include aspartate 476 and asparagine 483. Residues asparagine 483 and aspartate 487 each coordinate Na(+). Topologically, residues 495–542 are cytoplasmic; it reads EHLSRHELKNRDVEMGNSVIEENEMKKPYQLISQESEIEKSMDSETKM. Phosphoserine is present on serine 512.

It belongs to the dicarboxylate/amino acid:cation symporter (DAACS) (TC 2.A.23) family. SLC1A3 subfamily. In terms of assembly, homotrimer. Post-translationally, glycosylated.

It is found in the cell membrane. The enzyme catalyses K(+)(in) + L-glutamate(out) + 3 Na(+)(out) + H(+)(out) = K(+)(out) + L-glutamate(in) + 3 Na(+)(in) + H(+)(in). It catalyses the reaction K(+)(in) + L-aspartate(out) + 3 Na(+)(out) + H(+)(out) = K(+)(out) + L-aspartate(in) + 3 Na(+)(in) + H(+)(in). It carries out the reaction D-aspartate(out) + K(+)(in) + 3 Na(+)(out) + H(+)(out) = D-aspartate(in) + K(+)(out) + 3 Na(+)(in) + H(+)(in). In terms of biological role, sodium-dependent, high-affinity amino acid transporter that mediates the uptake of L-glutamate and also L-aspartate and D-aspartate. Functions as a symporter that transports one amino acid molecule together with two or three Na(+) ions and one proton, in parallel with the counter-transport of one K(+) ion. Plays a redundant role in the rapid removal of released glutamate from the synaptic cleft, which is essential for terminating the postsynaptic action of glutamate. The polypeptide is Excitatory amino acid transporter 1 (SLC1A3) (Bos taurus (Bovine)).